The following is a 361-amino-acid chain: YKLICYYTSWSQYREGDGSCFPDAIDPFLCTHVIYSFANISNNEIDTWEWNDVTLYDTLNTLKNRNPKLKTLLSVGGWNFGPERFSAIASKTQSRRTFIKSVPPFLRTHGFDGLDLAWLYPGRRDKRHLTTLVKEMKAEFIREAQAGTEQLLLSAAVSAGKIAIDRGYDIAQISRHLDFISLLTYDFHGAWRQTVGHHSPLFAGNEDASSRFSNADYAVSYMLRLGAPANKLVMGIPTFGRSFTLASSKTDVGAPVSGPGVPGRFTKEKGILAYYEICDFLHGATTHRFRDQQVPYATKGNQWVAYDDQESVKNKARYLKNRQLAGAMVWALDLDDFRGTFCGQNLTFPLTSAVKDVLAEV.

Residues 1–361 form the GH18 domain; it reads YKLICYYTSW…SAVKDVLAEV (361 aa). A disulfide bridge connects residues cysteine 5 and cysteine 30. The N-linked (GlcNAc...) asparagine glycan is linked to asparagine 39. Residues 49 to 50, 76 to 79, tyrosine 120, 183 to 186, and arginine 241 contribute to the chitin site; these read EW, GGWN, and LTYD. A disulfide bridge links cysteine 278 with cysteine 342. The segment at 302–316 is important for AKT1 activation and IL8 production; the sequence is QWVAYDDQESVKNKA. Residue tryptophan 330 participates in chitin binding. N-linked (GlcNAc...) asparagine glycosylation occurs at asparagine 345.

This sequence belongs to the glycosyl hydrolase 18 family. In terms of assembly, monomer. As to expression, detected in mammary gland.

Its subcellular location is the secreted. It localises to the extracellular space. The protein resides in the cytoplasm. The protein localises to the perinuclear region. It is found in the endoplasmic reticulum. Carbohydrate-binding lectin with a preference for chitin. Has no chitinase activity. May play a role in tissue remodeling and in the capacity of cells to respond to and cope with changes in their environment. Plays a role in T-helper cell type 2 (Th2) inflammatory response and IL-13-induced inflammation, regulating allergen sensitization, inflammatory cell apoptosis, dendritic cell accumulation and M2 macrophage differentiation. Facilitates invasion of pathogenic enteric bacteria into colonic mucosa and lymphoid organs. Mediates activation of AKT1 signaling pathway and subsequent IL8 production in colonic epithelial cells. Regulates antibacterial responses in lung by contributing to macrophage bacterial killing, controlling bacterial dissemination and augmenting host tolerance. Also regulates hyperoxia-induced injury, inflammation and epithelial apoptosis in lung. In Ovis aries (Sheep), this protein is Chitinase-3-like protein 1 (CHI3L1).